The chain runs to 229 residues: Molybdenum transport system permease protein ModB (229 aa).

The ABC transmembrane type-1 domain maps to 6 to 214 (INLSLSVAVS…LISLLLSEWL (209 aa)). The next 5 helical transmembrane spans lie at 12-32 (VAVS…WLLA), 45-65 (VIHL…LVAM), 83-103 (FGFS…PLVV), 132-152 (FFTI…VLGF), and 196-216 (LCLF…WLSK).

It belongs to the binding-protein-dependent transport system permease family. CysTW subfamily.

The protein resides in the cell inner membrane. Part of the binding-protein-dependent transport system for molybdenum; probably responsible for the translocation of the substrate across the membrane. The protein is Molybdenum transport system permease protein ModB (modB) of Haemophilus influenzae (strain ATCC 51907 / DSM 11121 / KW20 / Rd).